The following is a 332-amino-acid chain: MTHDHAHSRGVPAMIKEIFAPHSHDAADSVDDTLESTAAGIRTVKISLLVLGLTALIQIVIVVMSGSVALAADTIHNFADALTAVPLWIAFALGAKPATRRYTYGFGRVEDLAGSFVVAMITMSAIIAGYEAIARLIHPQQIEHVGWVALAGLVGFIGNEWVALYRIRVGHRIGSAALIADGLHARTDGFTSLAVLCSAGGVALGFPLADPIVGLLITAAILAVLRTAARDVFRRLLDGVDPAMVDAAEQALAARPGVQAVRSVRMRWIGHRLHADAELDVDPALDLAQAHRIAHDAEHELTHTVPKLTTALIHAYPAEHGSSIPDRGRTVE.

The next 5 membrane-spanning stretches (helical) occupy residues 46–66 (ISLLVLGLTALIQIVIVVMSG), 75–95 (IHNFADALTAVPLWIAFALGA), 113–133 (AGSFVVAMITMSAIIAGYEAI), 145–165 (VGWVALAGLVGFIGNEWVALY), and 202–222 (VALGFPLADPIVGLLITAAIL).

This sequence belongs to the cation diffusion facilitator (CDF) transporter (TC 2.A.4) family.

It localises to the cell membrane. The protein is Probable cation efflux system protein MT2084 of Mycobacterium tuberculosis (strain CDC 1551 / Oshkosh).